The chain runs to 296 residues: Glycine--tRNA ligase alpha subunit (296 aa).

This sequence belongs to the class-II aminoacyl-tRNA synthetase family. In terms of assembly, tetramer of two alpha and two beta subunits.

It localises to the cytoplasm. It carries out the reaction tRNA(Gly) + glycine + ATP = glycyl-tRNA(Gly) + AMP + diphosphate. This Francisella tularensis subsp. novicida (strain U112) protein is Glycine--tRNA ligase alpha subunit.